We begin with the raw amino-acid sequence, 461 residues long: MCHIILLGMNHKTAPVEMRERLAVACRQEVNPLRLLPRLENVDELLFLSTCNRVEFLFTCRDRDGGLREVTALLRTYLGLDSTEGVENHVYAFRGMEAVRHVFRVASSLDSMVVGEPQILGQLKSAYREATEWRTVKVILNRLLHKTFSVAKRVRSETCIGSNAVSISYAAVELAKKIFGSLQDKRVLLIGAGEMAELAAEHLLAQGVRHMVVANRTLERAVDLAKRFRAETTPFDHILNALKNTDIVLSSTGAPEPILKYNDVRARMRERRNKPLFFIDIAVPRDIDPKINEIDNVYLYDIDDLQGVIDLNREERKREAERAEHIIAGETLKFQEWMATLNVVPTIVALREKAETIRRSELQRTLSHLPHMSEKDRLAVEALTEAIVKKLLHDPIVFLKKKADRSTKDMYVDYTQQLFNLADGDDGEEAPAVTVQMASAGNDGTLLKTFEPDKESPWRKS.

Substrate-binding positions include threonine 50 to arginine 53, serine 111, glutamate 116 to glutamine 118, and glutamine 122. The active-site Nucleophile is cysteine 51. Glycine 191–alanine 196 contacts NADP(+).

Belongs to the glutamyl-tRNA reductase family. Homodimer.

It carries out the reaction (S)-4-amino-5-oxopentanoate + tRNA(Glu) + NADP(+) = L-glutamyl-tRNA(Glu) + NADPH + H(+). The protein operates within porphyrin-containing compound metabolism; protoporphyrin-IX biosynthesis; 5-aminolevulinate from L-glutamyl-tRNA(Glu): step 1/2. Catalyzes the NADPH-dependent reduction of glutamyl-tRNA(Glu) to glutamate 1-semialdehyde (GSA). The protein is Glutamyl-tRNA reductase of Syntrophobacter fumaroxidans (strain DSM 10017 / MPOB).